Reading from the N-terminus, the 325-residue chain is DNA-directed RNA polymerase subunit alpha (325 aa).

The segment at 1–231 (MQTSLLKPKI…DQLSVFAALE (231 aa)) is alpha N-terminal domain (alpha-NTD). An alpha C-terminal domain (alpha-CTD) region spans residues 246–325 (IDPILLRPVD…ENWPPAGLDK (80 aa)).

This sequence belongs to the RNA polymerase alpha chain family. Homodimer. The RNAP catalytic core consists of 2 alpha, 1 beta, 1 beta' and 1 omega subunit. When a sigma factor is associated with the core the holoenzyme is formed, which can initiate transcription.

It catalyses the reaction RNA(n) + a ribonucleoside 5'-triphosphate = RNA(n+1) + diphosphate. Its function is as follows. DNA-dependent RNA polymerase catalyzes the transcription of DNA into RNA using the four ribonucleoside triphosphates as substrates. The chain is DNA-directed RNA polymerase subunit alpha from Burkholderia multivorans (strain ATCC 17616 / 249).